A 492-amino-acid polypeptide reads, in one-letter code: MSDFSSSVKLKYVKLGYQYLINNFLTLLLIPVIATVAIELLRMGPEEILSVLNSLHFELLHILCSSFLIIFVSTVYFMSKPRTVYLVDYSCYKPPVTCRVPFSSFMEHSRLILKDNPKSVEFQMRILERSGLGEETCLPPAIHYIPPTPTMESARNEAQMVIFTAMEDLFKNTGLKPKDIDILIVNCSLFSPTPSLSAMIINKYKLRSNIKSYNLSGMGCSASLISVDVARDLLQVHPNSNAIIISTEIITPNYYKGNERAMLLPNCLFRMGGAAILLSNRRSDRWRAKYKLCHLVRTHRGADDKSYNCVMEQEDKNGNVGINLSKDLMTIAGEALKANITTIGPLVLPASEQLLFLSSLIGRKIFNPKWKPYIPDFKQAFEHFCIHAGGRAVIDELQKNLQLSGEHVEASRMTLHRFGNTSSSSLWYELSYIEAQGRMKRNDRVWQIAFGSGFKCNSAVWKCNRTIKTPTDGAWSDCIERYPVFIPEVVKL.

Transmembrane regions (helical) follow at residues 20–40 (LINNFLTLLLIPVIATVAIEL) and 59–79 (LLHILCSSFLIIFVSTVYFMS). The FAE domain maps to 76-365 (YFMSKPRTVY…FLSSLIGRKI (290 aa)). Residues C220, H299, H383, H387, H416, and N420 contribute to the active site.

The protein belongs to the thiolase-like superfamily. Chalcone/stilbene synthases family. In terms of tissue distribution, expressed in siliques, flowers, leaves and seedlings.

It localises to the membrane. The enzyme catalyses a very-long-chain acyl-CoA + malonyl-CoA + H(+) = a very-long-chain 3-oxoacyl-CoA + CO2 + CoA. It functions in the pathway lipid metabolism; fatty acid biosynthesis. With respect to regulation, inhibited by K3 herbicides such as alachlor, allidochlor, anilofos, cafenstrole and flufenacet. Strongly inhibited by metazachlor and mefluidide. Its function is as follows. Mediates mostly the synthesis of VLCFAs from 26 to 30 carbons in length (e.g. C20:1, C26, C28, C30). The sequence is that of 3-ketoacyl-CoA synthase 5 from Arabidopsis thaliana (Mouse-ear cress).